We begin with the raw amino-acid sequence, 894 residues long: DNA mismatch repair protein MutS (894 aa).

Residue 629–636 coordinates ATP; it reads GPNMGGKS. Residues 819 to 840 are disordered; the sequence is TPTPQLDLFAPPPHPDTSDDDE.

It belongs to the DNA mismatch repair MutS family.

In terms of biological role, this protein is involved in the repair of mismatches in DNA. It is possible that it carries out the mismatch recognition step. This protein has a weak ATPase activity. This is DNA mismatch repair protein MutS from Cupriavidus pinatubonensis (strain JMP 134 / LMG 1197) (Cupriavidus necator (strain JMP 134)).